Here is a 158-residue protein sequence, read N- to C-terminus: NAD(P)H-quinone oxidoreductase subunit N (158 aa).

It belongs to the complex I NdhN subunit family. In terms of assembly, NDH-1 can be composed of about 15 different subunits; different subcomplexes with different compositions have been identified which probably have different functions.

The protein resides in the cellular thylakoid membrane. It catalyses the reaction a plastoquinone + NADH + (n+1) H(+)(in) = a plastoquinol + NAD(+) + n H(+)(out). The enzyme catalyses a plastoquinone + NADPH + (n+1) H(+)(in) = a plastoquinol + NADP(+) + n H(+)(out). Its function is as follows. NDH-1 shuttles electrons from an unknown electron donor, via FMN and iron-sulfur (Fe-S) centers, to quinones in the respiratory and/or the photosynthetic chain. The immediate electron acceptor for the enzyme in this species is believed to be plastoquinone. Couples the redox reaction to proton translocation, and thus conserves the redox energy in a proton gradient. Cyanobacterial NDH-1 also plays a role in inorganic carbon-concentration. The protein is NAD(P)H-quinone oxidoreductase subunit N of Cyanothece sp. (strain PCC 7425 / ATCC 29141).